A 483-amino-acid polypeptide reads, in one-letter code: ATP synthase subunit beta (483 aa).

An ATP-binding site is contributed by 162-169 (GGAGVGKT).

Belongs to the ATPase alpha/beta chains family. As to quaternary structure, F-type ATPases have 2 components, CF(1) - the catalytic core - and CF(0) - the membrane proton channel. CF(1) has five subunits: alpha(3), beta(3), gamma(1), delta(1), epsilon(1). CF(0) has four main subunits: a(1), b(1), b'(1) and c(9-12).

It localises to the cellular thylakoid membrane. The enzyme catalyses ATP + H2O + 4 H(+)(in) = ADP + phosphate + 5 H(+)(out). Produces ATP from ADP in the presence of a proton gradient across the membrane. The catalytic sites are hosted primarily by the beta subunits. In Synechocystis sp. (strain ATCC 27184 / PCC 6803 / Kazusa), this protein is ATP synthase subunit beta.